A 375-amino-acid polypeptide reads, in one-letter code: Chaperone protein DnaJ (375 aa).

Residues 5–70 (DYYEVLGVSR…QKRAAYDQFG (66 aa)) enclose the J domain. The CR-type zinc finger occupies 131 to 209 (GTTVKIRVPS…CHGSGYVEEQ (79 aa)). Zn(2+) is bound by residues Cys-144, Cys-147, Cys-161, Cys-164, Cys-183, Cys-186, Cys-197, and Cys-200. CXXCXGXG motif repeat units follow at residues 144–151 (CKSCSGSG), 161–168 (CGTCNGAG), 183–190 (CPRCRGAG), and 197–204 (CRSCHGSG).

The protein belongs to the DnaJ family. Homodimer. The cofactor is Zn(2+).

It localises to the cytoplasm. Its function is as follows. Participates actively in the response to hyperosmotic and heat shock by preventing the aggregation of stress-denatured proteins and by disaggregating proteins, also in an autonomous, DnaK-independent fashion. Unfolded proteins bind initially to DnaJ; upon interaction with the DnaJ-bound protein, DnaK hydrolyzes its bound ATP, resulting in the formation of a stable complex. GrpE releases ADP from DnaK; ATP binding to DnaK triggers the release of the substrate protein, thus completing the reaction cycle. Several rounds of ATP-dependent interactions between DnaJ, DnaK and GrpE are required for fully efficient folding. Also involved, together with DnaK and GrpE, in the DNA replication of plasmids through activation of initiation proteins. The chain is Chaperone protein DnaJ from Hahella chejuensis (strain KCTC 2396).